Consider the following 30-residue polypeptide: Cytochrome c3, 50 kDa (30 aa).

Monomer. Post-translationally, binds 4 heme groups per subunit.

The protein resides in the periplasm. Participates in sulfate respiration coupled with phosphorylation by transferring electrons from the enzyme dehydrogenase to ferredoxin. The protein is Cytochrome c3, 50 kDa of Desulfuromonas acetoxidans (Chloropseudomonas ethylica).